A 442-amino-acid polypeptide reads, in one-letter code: Proline--tRNA ligase (442 aa).

It belongs to the class-II aminoacyl-tRNA synthetase family. ProS type 2 subfamily. Homodimer.

The protein localises to the cytoplasm. It carries out the reaction tRNA(Pro) + L-proline + ATP = L-prolyl-tRNA(Pro) + AMP + diphosphate. Its function is as follows. Catalyzes the attachment of proline to tRNA(Pro) in a two-step reaction: proline is first activated by ATP to form Pro-AMP and then transferred to the acceptor end of tRNA(Pro). This is Proline--tRNA ligase from Brucella anthropi (strain ATCC 49188 / DSM 6882 / CCUG 24695 / JCM 21032 / LMG 3331 / NBRC 15819 / NCTC 12168 / Alc 37) (Ochrobactrum anthropi).